Consider the following 268-residue polypeptide: Tryptophan synthase alpha chain (268 aa).

Active-site proton acceptor residues include Glu-49 and Asp-60.

It belongs to the TrpA family. As to quaternary structure, tetramer of two alpha and two beta chains.

It catalyses the reaction (1S,2R)-1-C-(indol-3-yl)glycerol 3-phosphate + L-serine = D-glyceraldehyde 3-phosphate + L-tryptophan + H2O. The protein operates within amino-acid biosynthesis; L-tryptophan biosynthesis; L-tryptophan from chorismate: step 5/5. Functionally, the alpha subunit is responsible for the aldol cleavage of indoleglycerol phosphate to indole and glyceraldehyde 3-phosphate. In Aeromonas hydrophila subsp. hydrophila (strain ATCC 7966 / DSM 30187 / BCRC 13018 / CCUG 14551 / JCM 1027 / KCTC 2358 / NCIMB 9240 / NCTC 8049), this protein is Tryptophan synthase alpha chain.